The sequence spans 238 residues: UPF0328 protein ECU07_0010 (238 aa).

Disordered regions lie at residues 1-154 and 211-238; these read MAAP…NTQR and GRLH…LATL. Residues 106–128 are compositionally biased toward basic and acidic residues; sequence HTEGCHTHEANPEPNTKHTETES. The segment covering 129-152 has biased composition (polar residues); that stretch reads PKPQTSTQHHTPITIPSSLLSQNT.

Belongs to the UPF0328 family.

This is UPF0328 protein ECU07_0010 from Encephalitozoon cuniculi (strain GB-M1) (Microsporidian parasite).